The following is a 459-amino-acid chain: Protein ABHD15 (459 aa).

Positions 1–28 (MPPWAAALALLLAALALLLLRPWKRAVG) are cleaved as a signal peptide. Active-site charge relay system residues include Asp-351 and His-382. Phosphoserine is present on Ser-425.

This sequence belongs to the AB hydrolase superfamily. AB hydrolase 4 family. Interacts with PDE3B; this interaction regulates PDE3B's stability and expression and, thereby, impacts the antilipolytic action of insulin. In terms of tissue distribution, mainly expressed in adipocytes and adipose depots, followed by a weak expression in liver and pancreas. In white adipose tissue (WAT), only expressed in mature adipocytes and primary adipocytes differentiated from stromal vascular cells (SVCs), but not in undifferentiated SVCs.

Its subcellular location is the secreted. Its function is as follows. May regulate adipocyte lipolysis and liver lipid accumulation. The sequence is that of Protein ABHD15 from Mus musculus (Mouse).